Here is a 432-residue protein sequence, read N- to C-terminus: 3-phosphoshikimate 1-carboxyvinyltransferase (432 aa).

The 3-phosphoshikimate site is built by lysine 23, serine 24, and arginine 28. Lysine 23 is a binding site for phosphoenolpyruvate. Phosphoenolpyruvate-binding residues include glycine 95 and arginine 123. 3-phosphoshikimate is bound by residues serine 167, glutamine 169, aspartate 317, and lysine 344. Phosphoenolpyruvate is bound at residue glutamine 169. The active-site Proton acceptor is the aspartate 317. 2 residues coordinate phosphoenolpyruvate: arginine 348 and arginine 390.

This sequence belongs to the EPSP synthase family. In terms of assembly, monomer.

Its subcellular location is the cytoplasm. It catalyses the reaction 3-phosphoshikimate + phosphoenolpyruvate = 5-O-(1-carboxyvinyl)-3-phosphoshikimate + phosphate. The protein operates within metabolic intermediate biosynthesis; chorismate biosynthesis; chorismate from D-erythrose 4-phosphate and phosphoenolpyruvate: step 6/7. Catalyzes the transfer of the enolpyruvyl moiety of phosphoenolpyruvate (PEP) to the 5-hydroxyl of shikimate-3-phosphate (S3P) to produce enolpyruvyl shikimate-3-phosphate and inorganic phosphate. This chain is 3-phosphoshikimate 1-carboxyvinyltransferase, found in Staphylococcus saprophyticus subsp. saprophyticus (strain ATCC 15305 / DSM 20229 / NCIMB 8711 / NCTC 7292 / S-41).